The following is a 529-amino-acid chain: RE1-silencing transcription factor B (529 aa).

The C2H2-type 1 zinc-finger motif lies at Phe-156–His-178. The interval Ser-188–Gly-210 is disordered. 7 C2H2-type zinc fingers span residues Ile-212 to His-234, Tyr-244 to His-266, Tyr-272 to His-294, Tyr-300 to His-322, Phe-328 to His-351, Leu-357 to His-379, and Phe-385 to His-408. Residues Leu-484 to Val-529 are disordered. Residues Lys-492–Arg-506 are compositionally biased toward basic and acidic residues. The segment covering Leu-518–Val-529 has biased composition (polar residues).

Its subcellular location is the nucleus. It localises to the cytoplasm. Transcriptional repressor which binds neuron-restrictive silencer element (NRSE) and represses neuronal gene transcription in non-neuronal cells. Plays a role in the early development of the nervous system and is required for proper patterning of the neuroectoderm during gastrulation. This involves the correct speciation of the neuroepithelial domain and adequate development of the non-neural ectoderm. The protein is RE1-silencing transcription factor B (rest-b) of Xenopus laevis (African clawed frog).